We begin with the raw amino-acid sequence, 273 residues long: Dermonecrotic toxin LhSicTox-alphaIA2bii (273 aa).

H5 is a catalytic residue. 2 residues coordinate Mg(2+): E25 and D27. The Nucleophile role is filled by H41. 2 disulfide bridges follow: C45-C51 and C47-C190. D85 serves as a coordination point for Mg(2+).

This sequence belongs to the arthropod phospholipase D family. Class II subfamily. The cofactor is Mg(2+). In terms of tissue distribution, expressed by the venom gland.

Its subcellular location is the secreted. The enzyme catalyses an N-(acyl)-sphingosylphosphocholine = an N-(acyl)-sphingosyl-1,3-cyclic phosphate + choline. It catalyses the reaction an N-(acyl)-sphingosylphosphoethanolamine = an N-(acyl)-sphingosyl-1,3-cyclic phosphate + ethanolamine. The catalysed reaction is a 1-acyl-sn-glycero-3-phosphocholine = a 1-acyl-sn-glycero-2,3-cyclic phosphate + choline. It carries out the reaction a 1-acyl-sn-glycero-3-phosphoethanolamine = a 1-acyl-sn-glycero-2,3-cyclic phosphate + ethanolamine. In terms of biological role, dermonecrotic toxins cleave the phosphodiester linkage between the phosphate and headgroup of certain phospholipids (sphingolipid and lysolipid substrates), forming an alcohol (often choline) and a cyclic phosphate. This toxin acts on sphingomyelin (SM). It may also act on ceramide phosphoethanolamine (CPE), lysophosphatidylcholine (LPC) and lysophosphatidylethanolamine (LPE), but not on lysophosphatidylserine (LPS), and lysophosphatidylglycerol (LPG). It acts by transphosphatidylation, releasing exclusively cyclic phosphate products as second products. Induces dermonecrosis, hemolysis, increased vascular permeability, edema, inflammatory response, and platelet aggregation. This Loxosceles hirsuta (Recluse spider) protein is Dermonecrotic toxin LhSicTox-alphaIA2bii.